A 205-amino-acid chain; its full sequence is Recombination protein RecR (205 aa).

Residues 58–75 (CSVCQNVTDRDADPCYIC) form a C4-type zinc finger. The 100-residue stretch at 83–182 (SVICVVESPA…SVTKIARGIP (100 aa)) folds into the Toprim domain.

The protein belongs to the RecR family.

May play a role in DNA repair. It seems to be involved in an RecBC-independent recombinational process of DNA repair. It may act with RecF and RecO. The polypeptide is Recombination protein RecR (Chlorobium limicola (strain DSM 245 / NBRC 103803 / 6330)).